The sequence spans 88 residues: Small ribosomal subunit protein bS20 (88 aa).

The segment at 1-26 (MANTAQARKRARQNTKRRQNSASQRS) is disordered. Basic residues predominate over residues 7–19 (ARKRARQNTKRRQ).

Belongs to the bacterial ribosomal protein bS20 family.

Functionally, binds directly to 16S ribosomal RNA. The chain is Small ribosomal subunit protein bS20 from Psychrobacter arcticus (strain DSM 17307 / VKM B-2377 / 273-4).